The chain runs to 510 residues: G-protein coupled receptor dmsr-1 (510 aa).

Topologically, residues Met-1–Ala-35 are extracellular. Residues Tyr-36 to Leu-56 form a helical membrane-spanning segment. Topologically, residues Thr-57–Pro-64 are cytoplasmic. A helical transmembrane segment spans residues Val-65–Ile-85. At Tyr-86–Trp-107 the chain is on the extracellular side. A helical transmembrane segment spans residues Ala-108–Leu-128. Topologically, residues Ser-129 to His-155 are cytoplasmic. A helical transmembrane segment spans residues Ser-156–Leu-176. Topologically, residues Asn-177–Trp-223 are extracellular. Asn-186 carries N-linked (GlcNAc...) asparagine glycosylation. A helical membrane pass occupies residues Ile-224 to Leu-244. At Leu-245–Met-307 the chain is on the cytoplasmic side. Residues Leu-308–Leu-328 traverse the membrane as a helical segment. Residues Ser-329 to Asn-343 lie on the Extracellular side of the membrane. The chain crosses the membrane as a helical span at residues Leu-344 to Cys-364. Over Ser-365 to Ile-510 the chain is Cytoplasmic. The tract at residues Gly-452–Ile-510 is disordered. Residues His-487–Ser-499 are compositionally biased toward polar residues.

Belongs to the G-protein coupled receptor 1 family. As to expression, expressed in head neurons including the RID neuron and the paired AIY neurons, and in tail neurons including the paired PHA and PHB neurons. Not expressed in AVE and AVA neurons.

The protein localises to the cell membrane. G-protein coupled receptor. In terms of biological role, G-protein coupled receptor for flp-13 RFamide neuropeptides in vitro. Upon activation by flp-13 RFamide neuropeptides, promotes sleep in response to cellular stress also known as stress-induced sleep (SIS), probably by inhibiting the activity of wake-promoting neurons. The protein is G-protein coupled receptor dmsr-1 of Caenorhabditis elegans.